The primary structure comprises 580 residues: Adenine deaminase 2 (580 aa).

It belongs to the metallo-dependent hydrolases superfamily. Adenine deaminase family. Requires Mn(2+) as cofactor.

It catalyses the reaction adenine + H2O + H(+) = hypoxanthine + NH4(+). This is Adenine deaminase 2 from Latilactobacillus sakei subsp. sakei (strain 23K) (Lactobacillus sakei subsp. sakei).